Consider the following 217-residue polypeptide: tRNA (guanine-N(7)-)-methyltransferase (217 aa).

S-adenosyl-L-methionine is bound by residues Glu44, Glu69, Asp96, and Asp118. Asp118 is a catalytic residue. Lys122 is a substrate binding site. The interval 124–129 (RHEKRR) is interaction with RNA. Substrate is bound by residues Asp154 and 191-194 (TEYE).

Belongs to the class I-like SAM-binding methyltransferase superfamily. TrmB family.

It carries out the reaction guanosine(46) in tRNA + S-adenosyl-L-methionine = N(7)-methylguanosine(46) in tRNA + S-adenosyl-L-homocysteine. Its pathway is tRNA modification; N(7)-methylguanine-tRNA biosynthesis. Its function is as follows. Catalyzes the formation of N(7)-methylguanine at position 46 (m7G46) in tRNA. This Bacillus velezensis (strain DSM 23117 / BGSC 10A6 / LMG 26770 / FZB42) (Bacillus amyloliquefaciens subsp. plantarum) protein is tRNA (guanine-N(7)-)-methyltransferase.